Reading from the N-terminus, the 404-residue chain is Argininosuccinate synthase (404 aa).

Residues 10–18 and A38 each bind ATP; that span reads AYSGGVDTS. An L-citrulline-binding site is contributed by Y89. G119 lines the ATP pocket. L-aspartate contacts are provided by T121, N125, and D126. N125 lines the L-citrulline pocket. Residues R129, S177, S186, E262, and Y274 each coordinate L-citrulline.

Belongs to the argininosuccinate synthase family. Type 1 subfamily. Homotetramer.

It localises to the cytoplasm. It catalyses the reaction L-citrulline + L-aspartate + ATP = 2-(N(omega)-L-arginino)succinate + AMP + diphosphate + H(+). The protein operates within amino-acid biosynthesis; L-arginine biosynthesis; L-arginine from L-ornithine and carbamoyl phosphate: step 2/3. This is Argininosuccinate synthase from Prochlorococcus marinus (strain MIT 9301).